A 314-amino-acid polypeptide reads, in one-letter code: Vacuolar membrane protein EC1118_1N9_3125g (314 aa).

Residues lysine 32–alanine 60 are disordered. A helical membrane pass occupies residues valine 93–leucine 113. Residues serine 148, serine 254, and serine 274 each carry the phosphoserine modification. The tract at residues glutamate 240–asparagine 309 is disordered. A compositionally biased stretch (basic and acidic residues) spans serine 254–histidine 269.

The protein belongs to the PRM5 family.

It is found in the vacuole membrane. This chain is Vacuolar membrane protein EC1118_1N9_3125g, found in Saccharomyces cerevisiae (strain Lalvin EC1118 / Prise de mousse) (Baker's yeast).